The following is a 121-amino-acid chain: MMIKIAVVLCAVMATSMVFANDVKEQELADLLDLLISEEVSSPDDAVAESWGHKLRSSWNKVKHAVKKGAGYASGACRVLGHSPQEARAKVLEAFPEMKESDLDEEQVGKYCAVAHAIHGR.

The first 20 residues, 1–20 (MMIKIAVVLCAVMATSMVFA), serve as a signal peptide directing secretion. A propeptide spanning residues 21-50 (NDVKEQELADLLDLLISEEVSSPDDAVAES) is cleaved from the precursor. Residues Trp-51 and Trp-59 each carry the 6'-bromotryptophan modification. A disulfide bond links Cys-77 and Cys-112. Positions 83 to 106 (SPQEARAKVLEAFPEMKESDLDEE) are excised as a propeptide. Position 107 is a pyrrolidone carboxylic acid (Gln-107). Position 119 is a histidine amide (His-119).

As to quaternary structure, heterodimer of a light and a heavy chain, probably disulfide-linked.

Has antimicrobial activity against Gram-negative bacteria, Gram-positive bacteria and against fungi with minimum inhibitory concentration (MIC) between 0.78 uM and 50 uM. Shows little hemolytic activity at concentrations up to 12.5 uM but &gt;50% lysis at 100 uM. In Echinus esculentus (Sea urchin), this protein is Centrocin 2.